A 111-amino-acid chain; its full sequence is Cell division protein FtsL (111 aa).

Residues 1 to 26 (MAQARTEFSKVAAPRKLEEMYAQRGD) are Cytoplasmic-facing. A helical transmembrane segment spans residues 27–47 (LFPYLLAVLVLLTLVSVFHVW). The Periplasmic segment spans residues 48–111 (SRVRVVDLNL…PTDQQVVVVK (64 aa)). A coiled-coil region spans residues 51-85 (RVVDLNLEVAEVARQLKVAQEEQNRLKLEVASLKT).

Belongs to the FtsL family.

It is found in the cell inner membrane. Essential cell division protein. The sequence is that of Cell division protein FtsL from Geobacter sulfurreducens (strain ATCC 51573 / DSM 12127 / PCA).